We begin with the raw amino-acid sequence, 226 residues long: Clarin-3 (226 aa).

Residues 8 to 28 traverse the membrane as a helical segment; sequence LMFLSGFLTSLGSVVVICSIL. N-linked (GlcNAc...) asparagine glycosylation is found at asparagine 46 and asparagine 83. 3 helical membrane passes run 92-112, 128-148, and 181-201; these read VVIILLILSLAASLLSSMFTF, GVYTWNGLSASFVFLTMVLFV, and FWLILLVILLNIVTVVIIIFY.

The protein belongs to the clarin family.

The protein resides in the membrane. The polypeptide is Clarin-3 (Clrn3) (Rattus norvegicus (Rat)).